Consider the following 912-residue polypeptide: Microtubule-associated protein 10 (912 aa).

6 disordered regions span residues 31-50 (VAEE…RPSR), 209-239 (KSVE…ADKP), 254-296 (GRAF…QEGT), 335-366 (ASEE…SATG), 443-469 (SPES…NEKS), and 730-859 (RACD…VSSY). Positions 211-229 (VEVSPQTWQENQQLQQPDS) are enriched in polar residues. The span at 254–263 (GRAFHSKADS) shows a compositional bias: basic and acidic residues. Polar residues predominate over residues 266 to 295 (TDSMENGKTNSDMCSKGSSERSVSPPNQEG). Low complexity predominate over residues 347–362 (ENVNPPTHTNPPEHTN). Residues 452–468 (CKSESKKDKLSVGENEK) show a composition bias toward basic and acidic residues. Over residues 735 to 768 (SPGTENPKNSQHTSTSSETRLSIRKNSSAKSSIL) the composition is skewed to polar residues. Residues 796–807 (EASSSDFSSSQW) are compositionally biased toward low complexity. Polar residues predominate over residues 841 to 859 (GCKSSEKSQSPRTSQVSSY).

As to quaternary structure, interacts (via middle region) with microtubules.

The protein localises to the cytoplasm. It is found in the cytoskeleton. Its subcellular location is the spindle pole. The protein resides in the microtubule organizing center. It localises to the centrosome. The protein localises to the midbody. In terms of biological role, microtubule-associated protein (MAP) that plays a role in the regulation of cell division; promotes microtubule stability and participates in the organization of the spindle midzone and normal progress of cytokinesis. The protein is Microtubule-associated protein 10 (MAP10) of Bos taurus (Bovine).